The chain runs to 178 residues: Large ribosomal subunit protein uL10 (178 aa).

Belongs to the universal ribosomal protein uL10 family. In terms of assembly, part of the ribosomal stalk of the 50S ribosomal subunit. The N-terminus interacts with L11 and the large rRNA to form the base of the stalk. The C-terminus forms an elongated spine to which L12 dimers bind in a sequential fashion forming a multimeric L10(L12)X complex.

In terms of biological role, forms part of the ribosomal stalk, playing a central role in the interaction of the ribosome with GTP-bound translation factors. This Albidiferax ferrireducens (strain ATCC BAA-621 / DSM 15236 / T118) (Rhodoferax ferrireducens) protein is Large ribosomal subunit protein uL10.